Consider the following 984-residue polypeptide: MADKITREEKTIATLDLVLRVVVDAGNWDVFSKRLVRYTREQYGIELPEDIGDLPDTSEVSKVLLSHLGEDKAVLSAYRIAELTQPSEMDRAKVTEGGLAVLNASRDESEAQNPSNPEPESIESDAVEDLGVAAESDPSDDEPDPEPEYDHREADHDSDADSGYYSADGGRPGTPVDEEPQDDSPSSEETASTVIEEAQTSASNDSHDDDTHRDDGSASEEDLERDALVAPADPFPNLRKCFERQAMMLTGALKDAADTADPPETLSVDSVQRQLERFVFNPDRRVPAEHLEVRYNFYPPFLTPKAIASYHIFAVTASIPLSCKANRSGSDLLAKAKESTFFKRLPKWRLGIEIDDGLGTEVTAVTELEEAKMVPLKDDVSRLQWAKMRGEHIRFFSYPSLHMPPKISRMLMETLLQPFADENQKAEEALPCLSDEEVLAIVDPTGRLHGEDALKAVEKRRAAVTMAVRYTATLELMERVFREPSMVKKMQEVLHHTFHHGFVALVRETAKVNLSNYATFHGLTYNNPLNNCIMSKLLEGADKEDYVVDSIYLFLVLTWQTAMGMWQQAIDDMTIQMYTEVFTKNKYRLYSLPNPTAIGKAIVDILMDYDRLTEEMRKALPNFTCQSQITAFRHFLLERSNIPAVAAPFMPSDFVPLAYKQSPPLLWDQVYLLQLAFYLTKHGGYLWEAPEEEANNPSNRTYCPCNLCSPHRMPGHNAALHNEILAIGTFEIRSPDGKTFKLTPELWTNAYLDKFDAEDFHPFTVFHYPENASRFASTLKACVTQSPEILSLIRQIQESREEFLLTKGKGVYKDPNTGETISRQPRDTARAQHAGDGQALPAPGAYTTGGNRAETAPAGAVRLAPDYQDGQFPIAKVGPHYHGPKNVRREDQGYRGGPGGVRGEREVVLSRRAGGRRFGRRNTRQSGYNERANRYFGRGGGGSVRGQQGEHPTTSPSASEPPAPSRILARGTPPSPERRDRQEE.

Residues 131–231 (GVAAESDPSD…DLERDALVAP (101 aa)) are disordered. A compositionally biased stretch (acidic residues) spans 137–147 (DPSDDEPDPEP). The segment covering 148–159 (EYDHREADHDSD) has biased composition (basic and acidic residues). Acidic residues predominate over residues 176 to 186 (VDEEPQDDSPS). Residues 190–202 (TASTVIEEAQTSA) show a composition bias toward polar residues. The span at 205-216 (DSHDDDTHRDDG) shows a compositional bias: basic and acidic residues. Residues 411–476 (LMETLLQPFA…AVRYTATLEL (66 aa)) are binding to host EIF4G. Residues 479 to 597 (RVFREPSMVK…RLYSLPNPTA (119 aa)) form the RRM domain. Disordered regions lie at residues 810-853 (GVYK…GNRA) and 876-984 (KVGP…RQEE). The residue at position 812 (Y812) is a Phosphotyrosine; by host. The span at 913 to 923 (AGGRRFGRRNT) shows a compositional bias: basic residues. Low complexity predominate over residues 945–958 (RGQQGEHPTTSPSA).

It belongs to the adenoviridae shutoff protein family. In terms of assembly, monomer. Interacts with hexon protein; this interaction allows chaperoning and trimerization of hexon proteins. Interacts (via N-terminus) with host initiation factor EIF4G (via C-terminus). Interacts (via RRM domain) with viral mRNAs that contain the tripartite leader; this interaction allows ribosome shunting and expression of viral late mRNAs. Might be cleaved by the viral protease. In terms of processing, phosphorylated. Tyrosine phosphorylation enhances preferential binding to tripartite leader mRNAs and allows ribosome shunting. Post-translationally, methylated. Asymmetric dimethylation by host PRMT1 of the Arg/Gly-rich region may regulate shutoff protein binding to hexon and promote the capsid assembly in the nucleus.

Its subcellular location is the host cytoplasm. Protein that inhibits host translation while promoting late viral translation by ribosome shunting. Blocks host cap-dependent translation by binding to eIF4G, displacing MKNK1 from cap initiation complexes and preventing EIF4E phosphorylation. Binds to the tripartite leader sequence of viral late mRNAs and recruits host eIF4G, PABPC1/poly-A binding protein and 40S ribosomes subunits on viral mRNAs, allowing ribosome shunting and efficient translation of late viral mRNAs even though conventional translation via ribosome scanning from the cap has been shut off in the host cell. During assembly, acts as a chaperone protein that helps hexon proteins assembly into trimers. This is Shutoff protein from Galliformes (FAdV-1).